Consider the following 21-residue polypeptide: Fibrinogen beta chain (21 aa).

Residue Gln-1 is modified to Pyrrolidone carboxylic acid. Positions 1–11 (QFPTDYDEGED) are enriched in acidic residues. Residues 1-21 (QFPTDYDEGEDDRPKSGLGAR) are disordered. An O-linked (GalNAc...) threonine glycan is attached at Thr-4. Tyr-6 is modified (sulfotyrosine).

In terms of assembly, heterohexamer; disulfide linked. Contains 2 sets of 3 non-identical chains (alpha, beta and gamma). The 2 heterotrimers are in head to head conformation with the N-termini in a small central domain. Conversion of fibrinogen to fibrin is triggered by thrombin, which cleaves fibrinopeptides A and B from alpha and beta chains, and thus exposes the N-terminal polymerization sites responsible for the formation of the soft clot.

It localises to the secreted. Its function is as follows. Cleaved by the protease thrombin to yield monomers which, together with fibrinogen alpha (FGA) and fibrinogen gamma (FGG), polymerize to form an insoluble fibrin matrix. Fibrin has a major function in hemostasis as one of the primary components of blood clots. In addition, functions during the early stages of wound repair to stabilize the lesion and guide cell migration during re-epithelialization. Was originally thought to be essential for platelet aggregation, based on in vitro studies using anticoagulated blood. However subsequent studies have shown that it is not absolutely required for thrombus formation in vivo. Enhances expression of SELP in activated platelets. Maternal fibrinogen is essential for successful pregnancy. Fibrin deposition is also associated with infection, where it protects against IFNG-mediated hemorrhage. May also facilitate the antibacterial immune response via both innate and T-cell mediated pathways. This Syncerus caffer (African buffalo) protein is Fibrinogen beta chain (FGB).